The chain runs to 385 residues: 8-amino-7-oxononanoate synthase (385 aa).

A substrate-binding site is contributed by R21. A pyridoxal 5'-phosphate-binding site is contributed by 108-109 (GF). H133 lines the substrate pocket. Positions 179, 207, and 233 each coordinate pyridoxal 5'-phosphate. K236 carries the post-translational modification N6-(pyridoxal phosphate)lysine. A substrate-binding site is contributed by T352.

It belongs to the class-II pyridoxal-phosphate-dependent aminotransferase family. BioF subfamily. In terms of assembly, homodimer. Requires pyridoxal 5'-phosphate as cofactor.

The catalysed reaction is 6-carboxyhexanoyl-[ACP] + L-alanine + H(+) = (8S)-8-amino-7-oxononanoate + holo-[ACP] + CO2. The protein operates within cofactor biosynthesis; biotin biosynthesis. Functionally, catalyzes the decarboxylative condensation of pimeloyl-[acyl-carrier protein] and L-alanine to produce 8-amino-7-oxononanoate (AON), [acyl-carrier protein], and carbon dioxide. The protein is 8-amino-7-oxononanoate synthase of Salmonella newport (strain SL254).